A 131-amino-acid polypeptide reads, in one-letter code: Small ribosomal subunit protein uS8 (131 aa).

The protein belongs to the universal ribosomal protein uS8 family. In terms of assembly, part of the 30S ribosomal subunit. Contacts proteins S5 and S12.

Functionally, one of the primary rRNA binding proteins, it binds directly to 16S rRNA central domain where it helps coordinate assembly of the platform of the 30S subunit. The polypeptide is Small ribosomal subunit protein uS8 (Legionella pneumophila (strain Paris)).